Here is a 420-residue protein sequence, read N- to C-terminus: Serine--tRNA ligase (420 aa).

L-serine is bound at residue 225–227; the sequence is TLE. Residue 256-258 participates in ATP binding; sequence RQE. Glu-279 is a binding site for L-serine. 343 to 346 serves as a coordination point for ATP; that stretch reads EVSS. Thr-379 lines the L-serine pocket.

Belongs to the class-II aminoacyl-tRNA synthetase family. Type-1 seryl-tRNA synthetase subfamily. In terms of assembly, homodimer. The tRNA molecule binds across the dimer.

It localises to the cytoplasm. The enzyme catalyses tRNA(Ser) + L-serine + ATP = L-seryl-tRNA(Ser) + AMP + diphosphate + H(+). It catalyses the reaction tRNA(Sec) + L-serine + ATP = L-seryl-tRNA(Sec) + AMP + diphosphate + H(+). Its pathway is aminoacyl-tRNA biosynthesis; selenocysteinyl-tRNA(Sec) biosynthesis; L-seryl-tRNA(Sec) from L-serine and tRNA(Sec): step 1/1. Catalyzes the attachment of serine to tRNA(Ser). Is also able to aminoacylate tRNA(Sec) with serine, to form the misacylated tRNA L-seryl-tRNA(Sec), which will be further converted into selenocysteinyl-tRNA(Sec). The protein is Serine--tRNA ligase of Mycoplasma pneumoniae (strain ATCC 29342 / M129 / Subtype 1) (Mycoplasmoides pneumoniae).